The chain runs to 244 residues: 3-deoxy-manno-octulosonate cytidylyltransferase (244 aa).

The protein belongs to the KdsB family.

It localises to the cytoplasm. The enzyme catalyses 3-deoxy-alpha-D-manno-oct-2-ulosonate + CTP = CMP-3-deoxy-beta-D-manno-octulosonate + diphosphate. Its pathway is nucleotide-sugar biosynthesis; CMP-3-deoxy-D-manno-octulosonate biosynthesis; CMP-3-deoxy-D-manno-octulosonate from 3-deoxy-D-manno-octulosonate and CTP: step 1/1. It functions in the pathway bacterial outer membrane biogenesis; lipopolysaccharide biosynthesis. In terms of biological role, activates KDO (a required 8-carbon sugar) for incorporation into bacterial lipopolysaccharide in Gram-negative bacteria. The sequence is that of 3-deoxy-manno-octulosonate cytidylyltransferase from Anaeromyxobacter sp. (strain Fw109-5).